Consider the following 160-residue polypeptide: Large ribosomal subunit protein eL21 (160 aa).

It belongs to the eukaryotic ribosomal protein eL21 family.

This is Large ribosomal subunit protein eL21 (RPL21) from Encephalitozoon cuniculi (strain GB-M1) (Microsporidian parasite).